The chain runs to 887 residues: Phosphatidylinositol 3-kinase catalytic subunit type 3 (887 aa).

The C2 PI3K-type domain occupies 35–184 (YKAVLEDPML…LAKLTKAHRQ (150 aa)). The interval 149-170 (VEADGSEPTRTPGRTSSTLSED) is disordered. Residues 156 to 170 (PTRTPGRTSSTLSED) are compositionally biased toward polar residues. At T163 the chain carries Phosphothreonine; by AMPK. At S165 the chain carries Phosphoserine; by AMPK. Residues S244, S261, and S282 each carry the phosphoserine modification. A PIK helical domain is found at 283 to 520 (DHDLKPNATT…PKTHEMYLNV (238 aa)). Positions 415-466 (LEPTKKDSQTSASESLSNSGVSSGDIDSSQIITNPLPPVASPPPASKAKEVS) are disordered. Low complexity predominate over residues 425–437 (SASESLSNSGVSS). Pro residues predominate over residues 449–459 (PLPPVASPPPA). One can recognise a PI3K/PI4K catalytic domain in the interval 605-871 (IPETATLFKS…LIDESVHALF (267 aa)). The G-loop stretch occupies residues 611–617 (LFKSALM). A catalytic loop region spans residues 740–748 (GVGDRHLDN). The tract at residues 759–780 (HIDFGYILGRDPKPLPPPMKLN) is activation loop.

It belongs to the PI3/PI4-kinase family. In terms of assembly, component of the PI3K (PI3KC3/PI3K-III/class III phosphatidylinositol 3-kinase) complex the core of which is composed of the catalytic subunit PIK3C3, the regulatory subunit PIK3R4 and BECN1 associating with additional regulatory/auxiliary subunits to form alternative complex forms. Alternative complex forms containing a fourth regulatory subunit in a mutually exclusive manner are: the PI3K complex I (PI3KC3-C1) containing ATG14, and the PI3K complex II (PI3KC3-C2) containing UVRAG. PI3KC3-C1 displays a V-shaped architecture with PIK3R4 serving as a bridge between PIK3C3 and the ATG14:BECN1 subcomplex. Both, PI3KC3-C1 and PI3KC3-C2, can associate with further regulatory subunits such as RUBCN, SH3GLB1/Bif-1 and AMBRA1. PI3KC3-C1 probably associates with PIK3CB. Interacts with RAB7A in the presence of PIK3R4. Interacts with AMBRA1. Interacts with BECN1P1/BECN2. Interacts with SLAMF1. May be a component of a complex composed of RAB5A (in GDP-bound form), DYN2 and PIK3C3. Interacts with NCKAP1L. Interacts with ATG14; this interaction is increased in the absence of TMEM39A. Interacts with STEEP1; the interaction is STING1-dependent and required for trafficking of STING1 from the endoplasmic reticulum. Interacts with YWHAG. Interacts with ARMC3. It depends on Mn(2+) as a cofactor. Ubiquitinated via 'Lys-29'- and 'Lys-48'-linked ubiquitination by UBE3C, promoting its degradation. Deubiquitination by ZRANB1/TRABID promotes its stabilization, leading to autophagosome maturation.

Its subcellular location is the midbody. It is found in the late endosome. It localises to the cytoplasmic vesicle. The protein resides in the autophagosome. It carries out the reaction a 1,2-diacyl-sn-glycero-3-phospho-(1D-myo-inositol) + ATP = a 1,2-diacyl-sn-glycero-3-phospho-(1D-myo-inositol-3-phosphate) + ADP + H(+). Its function is as follows. Catalytic subunit of the PI3K complex that mediates formation of phosphatidylinositol 3-phosphate; different complex forms are believed to play a role in multiple membrane trafficking pathways: PI3KC3-C1 is involved in initiation of autophagosomes and PI3KC3-C2 in maturation of autophagosomes and endocytosis. As part of PI3KC3-C1, promotes endoplasmic reticulum membrane curvature formation prior to vesicle budding. Involved in regulation of degradative endocytic trafficking and required for the abscission step in cytokinesis, probably in the context of PI3KC3-C2. Involved in the transport of lysosomal enzyme precursors to lysosomes. Required for transport from early to late endosomes. The polypeptide is Phosphatidylinositol 3-kinase catalytic subunit type 3 (Mus musculus (Mouse)).